Consider the following 239-residue polypeptide: Ribonuclease PH (239 aa).

Phosphate contacts are provided by residues R86 and 124 to 126 (GTR).

This sequence belongs to the RNase PH family. As to quaternary structure, homohexameric ring arranged as a trimer of dimers.

The enzyme catalyses tRNA(n+1) + phosphate = tRNA(n) + a ribonucleoside 5'-diphosphate. In terms of biological role, phosphorolytic 3'-5' exoribonuclease that plays an important role in tRNA 3'-end maturation. Removes nucleotide residues following the 3'-CCA terminus of tRNAs; can also add nucleotides to the ends of RNA molecules by using nucleoside diphosphates as substrates, but this may not be physiologically important. Probably plays a role in initiation of 16S rRNA degradation (leading to ribosome degradation) during starvation. This is Ribonuclease PH from Rhizobium etli (strain CIAT 652).